A 237-amino-acid chain; its full sequence is Phosphoribosylaminoimidazole-succinocarboxamide synthase (237 aa).

Belongs to the SAICAR synthetase family.

It carries out the reaction 5-amino-1-(5-phospho-D-ribosyl)imidazole-4-carboxylate + L-aspartate + ATP = (2S)-2-[5-amino-1-(5-phospho-beta-D-ribosyl)imidazole-4-carboxamido]succinate + ADP + phosphate + 2 H(+). It participates in purine metabolism; IMP biosynthesis via de novo pathway; 5-amino-1-(5-phospho-D-ribosyl)imidazole-4-carboxamide from 5-amino-1-(5-phospho-D-ribosyl)imidazole-4-carboxylate: step 1/2. This is Phosphoribosylaminoimidazole-succinocarboxamide synthase from Campylobacter fetus subsp. fetus (strain 82-40).